We begin with the raw amino-acid sequence, 609 residues long: Granule-bound starch synthase 1, chloroplastic/amyloplastic (609 aa).

Residues 1 to 77 constitute a chloroplast transit peptide; that stretch reads MSALTTSQLA…SRRFPSVVVY (77 aa). Residues 29–67 form a disordered region; that stretch reads RHGFQGLKPRSPAGGDATSLSVTTSARATPKQQRSVQRG. The segment covering 46–66 has biased composition (polar residues); it reads TSLSVTTSARATPKQQRSVQR. Lys-97 contributes to the ADP-alpha-D-glucose binding site. The ADP site is built by Gly-100, Arg-408, Lys-413, Lys-462, and Gln-493. Cys-337 and Cys-529 are joined by a disulfide.

Belongs to the glycosyltransferase 1 family. Bacterial/plant glycogen synthase subfamily.

The protein resides in the plastid. Its subcellular location is the chloroplast. It localises to the amyloplast. The enzyme catalyses an NDP-alpha-D-glucose + [(1-&gt;4)-alpha-D-glucosyl](n) = [(1-&gt;4)-alpha-D-glucosyl](n+1) + a ribonucleoside 5'-diphosphate + H(+). Its pathway is glycan biosynthesis; starch biosynthesis. Required for the synthesis of amylose in endosperm. The protein is Granule-bound starch synthase 1, chloroplastic/amyloplastic (WAXY) of Oryza sativa subsp. indica (Rice).